A 453-amino-acid chain; its full sequence is Nuclear distribution protein PAC1 (453 aa).

The LisH domain occupies 19–51 (QKDELHKSILDYFKTNNLHESFATLMREANQEG). The stretch at 69–96 (TSVIRLQKKIMEMESRISQLQEELSAAP) forms a coiled coil. WD repeat units lie at residues 120–161 (GHRL…RTLK), 162–201 (GHTK…KNIK), 205–244 (GHDH…CTKT), 247–286 (GHAE…TKVE), 314–355 (LDPN…KTLT), 356–395 (GHDN…CTRT), and 413–452 (IEAP…KIWT).

Belongs to the WD repeat LIS1/nudF family. In terms of assembly, self-associates. Interacts with NDL1 and dynein.

Its subcellular location is the cytoplasm. The protein localises to the cytoskeleton. It localises to the spindle pole. Functionally, positively regulates the activity of the minus-end directed microtubule motor protein dynein. May enhance dynein-mediated microtubule sliding by targeting dynein to the microtubule plus end. Required for nuclear migration during vegetative growth as well as development. Required for localization of dynein to the mitotic spindle poles. Recruits additional proteins to the dynein complex at SPBs. Required for retrograde early endosome (EE) transport from the hyphal tip. The sequence is that of Nuclear distribution protein PAC1 from Mycosarcoma maydis (Corn smut fungus).